Here is a 106-residue protein sequence, read N- to C-terminus: ATP-dependent Clp protease adapter protein ClpS (106 aa).

Residues 1–10 show a composition bias toward basic and acidic residues; that stretch reads MSQKTVHDQD. A disordered region spans residues 1 to 23; the sequence is MSQKTVHDQDNALLLETGNTKVA.

Belongs to the ClpS family. Binds to the N-terminal domain of the chaperone ClpA.

In terms of biological role, involved in the modulation of the specificity of the ClpAP-mediated ATP-dependent protein degradation. This chain is ATP-dependent Clp protease adapter protein ClpS, found in Xylella fastidiosa (strain M23).